A 197-amino-acid polypeptide reads, in one-letter code: SERTA domain-containing protein 3 (197 aa).

The interval 1–23 is disordered; sequence MGGLKRKHSDLEEEEEEEKWDWS. The region spanning 27–74 is the SERTA domain; that stretch reads LRSYQQALLRISLDKVQRSLGPRAPSLRRHVLIHNTLQQLQAAIRLAP.

Interacts with RPA2.

The protein localises to the nucleus. It is found in the nucleolus. Functionally, antiviral interferon-stimulated protein that plays a role in innate immunity and in the suppression of viruses through different mechanisms. Plays a role in the late phase response of TLR-induced immune effector expression. Strong transcriptional coactivator. This chain is SERTA domain-containing protein 3 (Sertad3), found in Mus musculus (Mouse).